A 185-amino-acid polypeptide reads, in one-letter code: ATP-dependent protease subunit HslV (185 aa).

Thr12 is a catalytic residue. Na(+) contacts are provided by Ala168, Cys171, and Thr174.

Belongs to the peptidase T1B family. HslV subfamily. A double ring-shaped homohexamer of HslV is capped on each side by a ring-shaped HslU homohexamer. The assembly of the HslU/HslV complex is dependent on binding of ATP.

The protein localises to the cytoplasm. The catalysed reaction is ATP-dependent cleavage of peptide bonds with broad specificity.. Its activity is regulated as follows. Allosterically activated by HslU binding. Protease subunit of a proteasome-like degradation complex believed to be a general protein degrading machinery. This Cereibacter sphaeroides (strain ATCC 17023 / DSM 158 / JCM 6121 / CCUG 31486 / LMG 2827 / NBRC 12203 / NCIMB 8253 / ATH 2.4.1.) (Rhodobacter sphaeroides) protein is ATP-dependent protease subunit HslV.